A 314-amino-acid chain; its full sequence is DNA-directed RNA polymerase subunit alpha (314 aa).

An alpha N-terminal domain (alpha-NTD) region spans residues Met-1–Thr-228. The tract at residues Glu-246–Asp-314 is alpha C-terminal domain (alpha-CTD).

This sequence belongs to the RNA polymerase alpha chain family. Homodimer. The RNAP catalytic core consists of 2 alpha, 1 beta, 1 beta' and 1 omega subunit. When a sigma factor is associated with the core the holoenzyme is formed, which can initiate transcription.

It carries out the reaction RNA(n) + a ribonucleoside 5'-triphosphate = RNA(n+1) + diphosphate. In terms of biological role, DNA-dependent RNA polymerase catalyzes the transcription of DNA into RNA using the four ribonucleoside triphosphates as substrates. In Staphylococcus aureus (strain Mu3 / ATCC 700698), this protein is DNA-directed RNA polymerase subunit alpha.